The sequence spans 562 residues: Probable sesquiterpene synthase (562 aa).

Mg(2+) is bound by residues D315, D319, and E467. A DDXXD motif motif is present at residues 315–319 (DDIYD).

The protein belongs to the terpene synthase family. Tpsa subfamily. Requires Mg(2+) as cofactor. It depends on Mn(2+) as a cofactor.

Its function is as follows. Sesquiterpene synthase. In Santalum austrocaledonicum (Sandalwood), this protein is Probable sesquiterpene synthase (SesquiTPS).